We begin with the raw amino-acid sequence, 168 residues long: Endoribonuclease YbeY (168 aa).

3 residues coordinate Zn(2+): His-123, His-127, and His-133.

The protein belongs to the endoribonuclease YbeY family. Zn(2+) serves as cofactor.

It localises to the cytoplasm. Its function is as follows. Single strand-specific metallo-endoribonuclease involved in late-stage 70S ribosome quality control and in maturation of the 3' terminus of the 16S rRNA. This is Endoribonuclease YbeY from Francisella tularensis subsp. holarctica (strain LVS).